Reading from the N-terminus, the 809-residue chain is Zygotic DNA replication licensing factor mcm3 (809 aa).

One can recognise an MCM domain in the interval 297–504; the sequence is IFEQLSRSLA…QDREISDHVL (208 aa). 347–354 contributes to the ATP binding site; it reads GDPSVAKS. The Arginine finger signature appears at 479–482; that stretch reads SRFD. The segment at 664–741 is disordered; the sequence is KKRRRRDEDS…TDSSAKPGLS (78 aa). Residues 696–705 are compositionally biased toward basic and acidic residues; the sequence is AQEGESHDPY.

Belongs to the MCM family. In terms of assembly, component of the mcm2-7 complex (RLF-M). The complex forms a toroidal hexameric ring with the proposed subunit order mcm2-mcm6-mcm4-mcm7-mcm3-mcm5. Component of the CMG helicase complex, composed of the mcm2-7 complex, the GINS complex and cdc45.

The protein localises to the nucleus. The protein resides in the chromosome. The enzyme catalyses ATP + H2O = ADP + phosphate + H(+). In terms of biological role, acts as a component of the MCM2-7 complex (MCM complex) which is the putative replicative helicase essential for 'once per cell cycle' DNA replication initiation and elongation in eukaryotic cells. The active ATPase sites in the MCM2-7 ring are formed through the interaction surfaces of two neighboring subunits such that a critical structure of a conserved arginine finger motif is provided in trans relative to the ATP-binding site of the Walker A box of the adjacent subunit. The six ATPase active sites, however, are likely to contribute differentially to the complex helicase activity. The existence of maternal and zygotic forms of mcm3 and mcm6 suggests that specific forms of mcm2-7 complexes may be used during different stages of development. This is Zygotic DNA replication licensing factor mcm3 (zmcm3) from Xenopus tropicalis (Western clawed frog).